The following is a 357-amino-acid chain: UDP-N-acetylglucosamine 2-epimerase homolog (357 aa).

Belongs to the UDP-N-acetylglucosamine 2-epimerase family.

This chain is UDP-N-acetylglucosamine 2-epimerase homolog, found in Methanococcus maripaludis (strain DSM 14266 / JCM 13030 / NBRC 101832 / S2 / LL).